The primary structure comprises 340 residues: Delta-aminolevulinic acid dehydratase (340 aa).

Zn(2+) contacts are provided by Cys134, Cys136, and Cys144. Lys211 serves as the catalytic Schiff-base intermediate with substrate. 2 residues coordinate 5-aminolevulinate: Arg221 and Arg233. Lys264 functions as the Schiff-base intermediate with substrate in the catalytic mechanism. The 5-aminolevulinate site is built by Ser291 and Tyr330.

This sequence belongs to the ALAD family. As to quaternary structure, homooctamer. It depends on Zn(2+) as a cofactor.

It carries out the reaction 2 5-aminolevulinate = porphobilinogen + 2 H2O + H(+). It participates in porphyrin-containing compound metabolism; protoporphyrin-IX biosynthesis; coproporphyrinogen-III from 5-aminolevulinate: step 1/4. In terms of biological role, catalyzes an early step in the biosynthesis of tetrapyrroles. Binds two molecules of 5-aminolevulinate per subunit, each at a distinct site, and catalyzes their condensation to form porphobilinogen. This is Delta-aminolevulinic acid dehydratase (HEM2) from Eremothecium gossypii (strain ATCC 10895 / CBS 109.51 / FGSC 9923 / NRRL Y-1056) (Yeast).